A 744-amino-acid chain; its full sequence is Cytosolic neutral trehalase (744 aa).

Ca(2+)-binding residues include D99, D101, N103, Q105, and D110. Substrate contacts are provided by residues R286, 293-294, N330, 339-341, E406, R455, and G458; these read WD and RSQ. Residues D460 and E665 each act as proton donor/acceptor in the active site.

The protein belongs to the glycosyl hydrolase 37 family. Ca(2+) serves as cofactor.

It localises to the cytoplasm. It catalyses the reaction alpha,alpha-trehalose + H2O = alpha-D-glucose + beta-D-glucose. It functions in the pathway carbohydrate degradation. Its function is as follows. Hydrolyzes intracellular trehalose to glucose. This is Cytosolic neutral trehalase from Neurospora crassa (strain ATCC 24698 / 74-OR23-1A / CBS 708.71 / DSM 1257 / FGSC 987).